The primary structure comprises 353 residues: MPTSLLRVGVVFGGASGEHAVSIRSARTVIEAFSAPENQERFAVIPHYIDREGRWWGPAVAERALEQNKALDAHELPQPLPAPGLRHWPVDPDSVDLWYPVLHGPNGEDGTVQGLFTLMNKPFVGSGVLGSAVGMDKLAMKAAFAAAGLSQVPYMGLTAADLEDPERLEQLLTRVEQELGYPCFVKPANLGSSVGITKANNRDELLAGLHQAAALDPRLLVEQGVNARELECAVLGRRHLRASVVGEIRFDADWYDYETKYTEGRSHTLIPAPLPALVSQQIQAMAIRACHAVHAFGQARVDVFYDETSGEIWLNEINTLPGFTSQSMYPTLWAASGIPLPQLVAELVDTAQE.

In terms of domain architecture, ATP-grasp spans lysine 141–aspartate 349. Glutamate 176–glutamate 231 provides a ligand contact to ATP. Residues aspartate 302, glutamate 316, and asparagine 318 each contribute to the Mg(2+) site.

This sequence belongs to the D-alanine--D-alanine ligase family. Requires Mg(2+) as cofactor. Mn(2+) is required as a cofactor.

It localises to the cytoplasm. The catalysed reaction is 2 D-alanine + ATP = D-alanyl-D-alanine + ADP + phosphate + H(+). It participates in cell wall biogenesis; peptidoglycan biosynthesis. Cell wall formation. This chain is D-alanine--D-alanine ligase, found in Synechococcus sp. (strain WH7803).